Here is a 374-residue protein sequence, read N- to C-terminus: (R)-phenyllactyl-CoA dehydratase beta subunit (374 aa).

The protein belongs to the FldB/FldC dehydratase alpha/beta subunit family. As to quaternary structure, part of the heterotrimeric phenyllactate dehydratase complex FldABC, composed of (R)-phenyllactate CoA-transferase (FldA) and a heterodimeric (R)-phenyllactyl-CoA dehydratase (FldB and FldC). Requires [4Fe-4S] cluster as cofactor. No flavin could be detected in the FldABC complex, and the addition of FAD, FMN or riboflavin to the dehydratase do not increase enzymatic activity. serves as cofactor.

The catalysed reaction is (R)-3-phenyllactoyl-CoA = (E)-cinnamoyl-CoA + H2O. It catalyses the reaction (R)-3-(4-hydroxyphenyl)lactoyl-CoA = (E)-4-coumaroyl-CoA + H2O. It carries out the reaction (R)-3-(indol-3-yl)lactoyl-CoA = (E)-3-(indol-3-yl)acryloyl-CoA + H2O. It functions in the pathway amino-acid degradation; L-phenylalanine degradation. Functionally, component of the phenyllactate dehydratase complex FldABC that is involved in the fermentation of L-phenylalanine via a Stickland reaction. This complex catalyzes the reversible syn-dehydration of (R)-phenyllactate to (E)-cinnamate in two steps, a CoA-transfer from cinnamoyl-CoA to phenyllactate, catalyzed by FldA, followed by the dehydration of phenyllactyl-CoA to cinnamoyl-CoA, catalyzed by FldB and FldC. Requires the activator FldI to initiate catalysis. This chain is (R)-phenyllactyl-CoA dehydratase beta subunit, found in Clostridium sporogenes.